The primary structure comprises 175 residues: Epididymal-specific lipocalin-8 (175 aa).

The first 22 residues, 1–22 (MEARLLSNVCGFFLVFLLQAES), serve as a signal peptide directing secretion. N-linked (GlcNAc...) asparagine glycosylation is found at Asn-66 and Asn-74. A disulfide bond links Cys-79 and Cys-166.

This sequence belongs to the calycin superfamily. Lipocalin family. In terms of tissue distribution, predominantly expressed in epididymis.

The protein localises to the secreted. Functionally, may play a role in male fertility. May act as a retinoid carrier protein within the epididymis. The protein is Epididymal-specific lipocalin-8 (Lcn8) of Mus musculus (Mouse).